The chain runs to 475 residues: Sulfate adenylyltransferase subunit 1 (475 aa).

In terms of domain architecture, tr-type G spans 25-239 (KSLLRFLTCG…EVLETVEIQR (215 aa)). The interval 34–41 (GSVDDGKS) is G1. Residue 34–41 (GSVDDGKS) coordinates GTP. The segment at 92–96 (GITID) is G2. Positions 113 to 116 (DTPG) are G3. GTP contacts are provided by residues 113–117 (DTPGH) and 168–171 (NKMD). Positions 168 to 171 (NKMD) are G4. Residues 206-208 (SAL) are G5.

It belongs to the TRAFAC class translation factor GTPase superfamily. Classic translation factor GTPase family. CysN/NodQ subfamily. Heterodimer composed of CysD, the smaller subunit, and CysN.

The catalysed reaction is sulfate + ATP + H(+) = adenosine 5'-phosphosulfate + diphosphate. It participates in sulfur metabolism; hydrogen sulfide biosynthesis; sulfite from sulfate: step 1/3. Functionally, with CysD forms the ATP sulfurylase (ATPS) that catalyzes the adenylation of sulfate producing adenosine 5'-phosphosulfate (APS) and diphosphate, the first enzymatic step in sulfur assimilation pathway. APS synthesis involves the formation of a high-energy phosphoric-sulfuric acid anhydride bond driven by GTP hydrolysis by CysN coupled to ATP hydrolysis by CysD. This is Sulfate adenylyltransferase subunit 1 from Shigella dysenteriae serotype 1 (strain Sd197).